The primary structure comprises 200 residues: Interferon lambda-2 (200 aa).

The signal sequence occupies residues 1 to 25 (MKLDMTGDCTPVLVLMAAVLTVTGA).

This sequence belongs to the lambda interferon family.

The protein localises to the secreted. Cytokine with antiviral, antitumour and immunomodulatory activities. Plays a critical role in the antiviral host defense, predominantly in the epithelial tissues. Acts as a ligand for the heterodimeric class II cytokine receptor composed of IL10RB and IFNLR1, and receptor engagement leads to the activation of the JAK/STAT signaling pathway resulting in the expression of IFN-stimulated genes (ISG), which mediate the antiviral state. Has a restricted receptor distribution and therefore restricted targets: is primarily active in epithelial cells and this cell type-selective action is because of the epithelial cell-specific expression of its receptor IFNLR1. Seems not to be essential for early virus-activated host defense in vaginal infection, but plays an important role in Toll-like receptor (TLR)-induced antiviral defense. Plays a significant role in the antiviral immune defense in the intestinal epithelium. Exerts an immunomodulatory effect by up-regulating MHC class I antigen expression. This is Interferon lambda-2 (IFNL2) from Homo sapiens (Human).